A 924-amino-acid chain; its full sequence is MAGILSVVHIIIIFIVRFKSSTDSLITVVVSASFQRANIYKFSLLAKLAHGAALIPRADADTWTYLGCYTDQVGARTLGQVGYTLGGPGNMTVANCQNGCASQGYSLAGVEYSSECWCDNQLRNGGGPAPDGEAMCSMPCNGNPEQKCGGPGRLNLYQNTAIKPTDTMTTSAPSTETGSPTTTSVPEPTQGLPDGWQYSGCYQDNVNGGRVMFKMLPDSSTLTIESCVAMCVKLGYTVAGAEYSKQCFCDNYLRNAAPQAIESECSMTCSGNTQQKCGGPSRLSVYSKGNLTVLPIPVPQTGGLPGGWKYQGCLQDNVNMKRTFPYQIVDKTNNTATNCLSRCSKFGFGAGGMTYSEECFCGDFEDIAAAGAKLVPEAMCSQTCSGNATAICGAGNLITYYRWMDEPLQKWNRPTGINAGRYDFLIGGVLVPLITTVGINGKITFQEKSGTGDPNTTGAYEFDPYYEKDFSKAWREMHVKTDIFCAGGLVLPDKVGRQLTVGGWSGISTEGVRLYWPDGSPGKPGVNDWHESPDDLRLQNGRWYPTAMTMSNGSILVVGGEEGSNGAPVPTLEILPRVGPVLFMDWLKRTDPNNLYPYLTPLPGGNILAAYYNEARILDERTFDTVKTLPNIPGAVNNDAGGRTYPLEGTMVLLPQKAPYTEPLGVLICGGSTPYGGDALDNCVSIQPEVPNAEWVIERMPSKRVLTCMAGLPDGTFLILNGARKGVAGFGLAEDPNLGAVLYDPSKPVNQRMSIMANTTIARMYHSEAILMADGRVLVSGSDPQDPRFPQERRVEVFLPPYILSGARRPTFTIANKDWAYGGKYKIKITSGNQSRIKISLMGMVSSTHGNSFGSRTIFPAFSCSFGTCTITAPPDSHTCPPGWFMLFVLDGPTPSVASFVRIGGDPGRLGDWPATGGFPLPGV.

A signal peptide spans 1–24 (MAGILSVVHIIIIFIVRFKSSTDS). One can recognise a WSC 1 domain in the interval 62 to 160 (TWTYLGCYTD…PGRLNLYQNT (99 aa)). Residue Asn90 is glycosylated (N-linked (GlcNAc...) asparagine). Residues 166–190 (DTMTTSAPSTETGSPTTTSVPEPTQ) form a disordered region. Low complexity predominate over residues 169-189 (TTSAPSTETGSPTTTSVPEPT). A WSC 2 domain is found at 195-289 (GWQYSGCYQD…PSRLSVYSKG (95 aa)). N-linked (GlcNAc...) asparagine glycans are attached at residues Asn290, Asn333, Asn387, Asn455, Asn552, Asn758, and Asn833. The 98-residue stretch at 307-404 (GWKYQGCLQD…GNLITYYRWM (98 aa)) folds into the WSC 3 domain.

The protein localises to the secreted. This is WSC domain-containing protein ARB_07867 from Arthroderma benhamiae (strain ATCC MYA-4681 / CBS 112371) (Trichophyton mentagrophytes).